An 874-amino-acid polypeptide reads, in one-letter code: DNA mismatch repair protein MutS (874 aa).

Basic and acidic residues predominate over residues 1-12 (MSNDRPLTHSEA). The interval 1–20 (MSNDRPLTHSEAESSALRLG) is disordered. 661–668 (GPNASGKS) is a binding site for ATP. Positions 854 to 874 (RKSSMGDPPTAPEINQGELPF) are disordered.

Belongs to the DNA mismatch repair MutS family.

Functionally, this protein is involved in the repair of mismatches in DNA. It is possible that it carries out the mismatch recognition step. This protein has a weak ATPase activity. The sequence is that of DNA mismatch repair protein MutS from Thermosynechococcus vestitus (strain NIES-2133 / IAM M-273 / BP-1).